We begin with the raw amino-acid sequence, 390 residues long: Succinate--CoA ligase [ADP-forming] subunit beta (390 aa).

The 237-residue stretch at 9–245 folds into the ATP-grasp domain; sequence KHLLKKYNIP…TTQEDEHETM (237 aa). ATP-binding positions include Lys46, 53-55, Glu99, Ser102, and Glu107; that span reads GRG. The Mg(2+) site is built by Asn200 and Asp214. Substrate contacts are provided by residues Asn265 and 322 to 324; that span reads GIV.

The protein belongs to the succinate/malate CoA ligase beta subunit family. As to quaternary structure, heterotetramer of two alpha and two beta subunits. It depends on Mg(2+) as a cofactor.

It carries out the reaction succinate + ATP + CoA = succinyl-CoA + ADP + phosphate. The enzyme catalyses GTP + succinate + CoA = succinyl-CoA + GDP + phosphate. It functions in the pathway carbohydrate metabolism; tricarboxylic acid cycle; succinate from succinyl-CoA (ligase route): step 1/1. Its function is as follows. Succinyl-CoA synthetase functions in the citric acid cycle (TCA), coupling the hydrolysis of succinyl-CoA to the synthesis of either ATP or GTP and thus represents the only step of substrate-level phosphorylation in the TCA. The beta subunit provides nucleotide specificity of the enzyme and binds the substrate succinate, while the binding sites for coenzyme A and phosphate are found in the alpha subunit. The sequence is that of Succinate--CoA ligase [ADP-forming] subunit beta from Coxiella burnetii (strain CbuG_Q212) (Coxiella burnetii (strain Q212)).